The chain runs to 185 residues: Ribosome-recycling factor (185 aa).

The protein belongs to the RRF family.

The protein resides in the cytoplasm. Responsible for the release of ribosomes from messenger RNA at the termination of protein biosynthesis. May increase the efficiency of translation by recycling ribosomes from one round of translation to another. The polypeptide is Ribosome-recycling factor (Citrifermentans bemidjiense (strain ATCC BAA-1014 / DSM 16622 / JCM 12645 / Bem) (Geobacter bemidjiensis)).